The primary structure comprises 460 residues: Argininosuccinate lyase (460 aa).

It belongs to the lyase 1 family. Argininosuccinate lyase subfamily.

Its subcellular location is the cytoplasm. It catalyses the reaction 2-(N(omega)-L-arginino)succinate = fumarate + L-arginine. It functions in the pathway amino-acid biosynthesis; L-arginine biosynthesis; L-arginine from L-ornithine and carbamoyl phosphate: step 3/3. The chain is Argininosuccinate lyase from Maridesulfovibrio salexigens (strain ATCC 14822 / DSM 2638 / NCIMB 8403 / VKM B-1763) (Desulfovibrio salexigens).